Consider the following 822-residue polypeptide: Probable phosphoketolase (822 aa).

It belongs to the XFP family. Requires thiamine diphosphate as cofactor.

This Nocardia farcinica (strain IFM 10152) protein is Probable phosphoketolase.